Reading from the N-terminus, the 512-residue chain is D-alanine--D-alanyl carrier protein ligase (512 aa).

152 to 153 (TS) contacts ATP. A D-alanine-binding site is contributed by D199. 294–299 (NAYGPT) provides a ligand contact to ATP. Residue V303 participates in D-alanine binding. ATP is bound by residues D385, 397–400 (YGGR), and K499. Residue K499 coordinates D-alanine.

It belongs to the ATP-dependent AMP-binding enzyme family. DltA subfamily.

It localises to the cytoplasm. The catalysed reaction is holo-[D-alanyl-carrier protein] + D-alanine + ATP = D-alanyl-[D-alanyl-carrier protein] + AMP + diphosphate. The protein operates within cell wall biogenesis; lipoteichoic acid biosynthesis. Functionally, catalyzes the first step in the D-alanylation of lipoteichoic acid (LTA), the activation of D-alanine and its transfer onto the D-alanyl carrier protein (Dcp) DltC. In an ATP-dependent two-step reaction, forms a high energy D-alanyl-AMP intermediate, followed by transfer of the D-alanyl residue as a thiol ester to the phosphopantheinyl prosthetic group of the Dcp. D-alanylation of LTA plays an important role in modulating the properties of the cell wall in Gram-positive bacteria, influencing the net charge of the cell wall. This chain is D-alanine--D-alanyl carrier protein ligase, found in Streptococcus pyogenes serotype M28 (strain MGAS6180).